Consider the following 270-residue polypeptide: Acyl-[acyl-carrier-protein]--UDP-N-acetylglucosamine O-acyltransferase (270 aa).

It belongs to the transferase hexapeptide repeat family. LpxA subfamily. As to quaternary structure, homotrimer.

The protein resides in the cytoplasm. The enzyme catalyses a (3R)-hydroxyacyl-[ACP] + UDP-N-acetyl-alpha-D-glucosamine = a UDP-3-O-[(3R)-3-hydroxyacyl]-N-acetyl-alpha-D-glucosamine + holo-[ACP]. Its pathway is glycolipid biosynthesis; lipid IV(A) biosynthesis; lipid IV(A) from (3R)-3-hydroxytetradecanoyl-[acyl-carrier-protein] and UDP-N-acetyl-alpha-D-glucosamine: step 1/6. Its function is as follows. Involved in the biosynthesis of lipid A, a phosphorylated glycolipid that anchors the lipopolysaccharide to the outer membrane of the cell. The polypeptide is Acyl-[acyl-carrier-protein]--UDP-N-acetylglucosamine O-acyltransferase (Helicobacter pylori (strain P12)).